We begin with the raw amino-acid sequence, 70 residues long: Large ribosomal subunit protein uL29 (70 aa).

Belongs to the universal ribosomal protein uL29 family.

The sequence is that of Large ribosomal subunit protein uL29 (rpl29) from Methanocaldococcus jannaschii (strain ATCC 43067 / DSM 2661 / JAL-1 / JCM 10045 / NBRC 100440) (Methanococcus jannaschii).